The sequence spans 448 residues: MGAIPKTGTISPEQKDSQEKNLFQKIWSWEIGVIPLPLYTVLAVIIILAAYYNELPANMLGGFAIIMILGVFLGDIGQRIPILKDIGGPAILSLFVPSFLVFYNVLNSTSLDAVTNLMKTSNFLYFYIACLVVGSILGMNRIVLIQGFIRMFVPLVAGTIAAVAAGILVGFIFGYSAYDSFFFVVVPIIAGGIGEGILPLSIAYSQILGSSADVFVSQLVPAAIIGNVFAIICAALMKKLGDKRPDLNGNGRLVKSKKANEIFNQKEAEAKIDFKLMGAGVLLACTFFIFGGLLEKFIFIPGAILMIISAAAVKYANILPKKMEEGAYQLYKFISSSFTWPLMVGLGILFIPLDDVASVISIPFVIICISVVIAMIGSGYFVGKLMNMYPVESAIVTCCHSGLGGTGDVAILSASGRMGLMPFAQISTRLGGAGTVICATVLLRFFTS.

11 helical membrane-spanning segments follow: residues Ile-31–Tyr-51, Leu-60–Ile-80, Ile-86–Leu-106, Phe-123–Val-143, Val-153–Phe-173, Phe-182–Ile-202, Val-214–Ala-234, Leu-276–Leu-293, Phe-297–Leu-319, Phe-333–Leu-353, and Val-359–Gly-379.

It belongs to the 2-hydroxycarboxylate transporter (2-HCT) (TC 2.A.24) family.

It is found in the cell membrane. Acts as a Na(+)-malate symporter, as it catalyzes malate-dependent uptake of Na(+) and Na(+)-dependent uptake of malate. The polypeptide is Na(+)-malate symporter (Bacillus subtilis (strain 168)).